The primary structure comprises 787 residues: MAVWIQAQQLQGEALHQMQALYGQHFPIEVRHYLSQWIESQAWDSVDLDNPQENIKATQLLEGLVQELQKKAEHQVGEDGFLLKIKLGHYATQLQNTYDRCPMELVRCIRHILYNEQRLVREANNGSSPAGSLADAMSQKHLQINQTFEELRLVTQDTENELKKLQQTQEYFIIQYQESLRIQAQFGPLAQLSPQERLSRETALQQKQVSLEAWLQREAQTLQQYRVELAEKHQKTLQLLRKQQTIILDDELIQWKRRQQLAGNGGPPEGSLDVLQSWCEKLAEIIWQNRQQIRRAEHLCQQLPIPGPVEEMLAEVNATITDIISALVTSTFIIEKQPPQVLKTQTKFAATVRLLVGGKLNVHMNPPQVKATIISEQQAKSLLKNENTRNDYSGEILNNCCVMEYHQATGTLSAHFRNMSLKRIKRSDRRGAESVTEEKFTILFESQFSVGGNELVFQVKTLSLPVVVIVHGSQDNNATATVLWDNAFAEPGRVPFAVPDKVLWPQLCEALNMKFKAEVQSNRGLTKENLVFLAQKLFNNSSSHLEDYSGLSVSWSQFNRENLPGRNYTFWQWFDGVMEVLKKHLKPHWNDGAILGFVNKQQAHDLLINKPDGTFLLRFSDSEIGGITIAWKFDSQERMFWNLMPFTTRDFSIRSLADRLGDLNYLIYVFPDRPKDEVYSKYYTPVPCESATAKAVDGYVKPQIKQVVPEFVNASADAGGGSATYMDQAPSPAVCPQAHYNMYPQNPDSVLDTDGDFDLEDTMDVARRVEELLGRPMDSQWIPHAQS.

Tyr90 bears the Phosphotyrosine mark. A phosphoserine mark is found at Ser128 and Ser193. The required for interaction with NMI stretch occupies residues 232 to 321 (KHQKTLQLLR…MLAEVNATIT (90 aa)). The 98-residue stretch at 589 to 686 (WNDGAILGFV…EVYSKYYTPV (98 aa)) folds into the SH2 domain. Tyr682 bears the Phosphotyrosine mark. Tyr699 bears the Phosphotyrosine; by HCK, JAK and PTK6 mark.

This sequence belongs to the transcription factor STAT family. In terms of assembly, upon activation, forms homodimers. Forms also heterodimers with related family members. Binds NR3C1. Interacts with NCOA1. Interacts with NMI. Interacts with SOCS7. Interacts (via SH2 domain) with INSR. Interacts with CPEB3; this inhibits STAT5B-mediated transcriptional activation. In terms of processing, tyrosine phosphorylated in response to signaling via activated KIT, resulting in translocation to the nucleus. Tyrosine phosphorylated in response to signaling via activated FLT3; wild-type FLT3 results in much weaker phosphorylation than constitutively activated mutant FLT3. Alternatively, can be phosphorylated by JAK2. Phosphorylation at Tyr-699 by PTK6 or HCK leads to an increase of its transcriptional activity.

The protein resides in the cytoplasm. The protein localises to the nucleus. Its function is as follows. Carries out a dual function: signal transduction and activation of transcription. Mediates cellular responses to the cytokine KITLG/SCF and other growth factors. Binds to the GAS element and activates PRL-induced transcription. Positively regulates hematopoietic/erythroid differentiation. The sequence is that of Signal transducer and activator of transcription 5B (STAT5B) from Homo sapiens (Human).